The chain runs to 90 residues: Probable small nuclear ribonucleoprotein E (90 aa).

Residues 14-89 (VNLIFRYLQN…ITLIHAAQQE (76 aa)) form the Sm domain.

It belongs to the snRNP Sm proteins family. Core component of the spliceosomal U1, U2, U4 and U5 small nuclear ribonucleoproteins (snRNPs), the building blocks of the spliceosome.

It localises to the nucleus. The protein localises to the cytoplasm. The protein resides in the cytosol. Plays a role in pre-mRNA splicing as a core component of the spliceosomal U1, U2, U4 and U5 small nuclear ribonucleoproteins (snRNPs), the building blocks of the spliceosome. This is Probable small nuclear ribonucleoprotein E (snr-6) from Caenorhabditis elegans.